The chain runs to 191 residues: Thymidylate kinase (191 aa).

Residue 7 to 14 (GIDTCGKS) participates in ATP binding.

Belongs to the thymidylate kinase family.

It carries out the reaction dTMP + ATP = dTDP + ADP. In terms of biological role, phosphorylation of dTMP to form dTDP in both de novo and salvage pathways of dTTP synthesis. This chain is Thymidylate kinase, found in Sulfurovum sp. (strain NBC37-1).